The sequence spans 532 residues: Probable C4-dicarboxylate sensor kinase (532 aa).

Over 1-12 (MRLFRQLSIQWK) the chain is Cytoplasmic. A helical membrane pass occupies residues 13-33 (ITILSFGIVAFALMMVSISLL). The Extracellular segment spans residues 34–175 (GYVTSIKEDE…YADMIQEFWQ (142 aa)). Residues 176 to 196 (PALLIGLITALFGFWGSWLLA) traverse the membrane as a helical segment. Residues 197-532 (SHIKRQTFNM…FSIYLPKKRG (336 aa)) lie on the Cytoplasmic side of the membrane. Residues 216–279 (VERDASFNAI…PEILSIGKPL (64 aa)) form the PAS domain. A Histidine kinase domain is found at 315 to 531 (SDVDRLAEEL…TFSIYLPKKR (217 aa)). A Phosphohistidine; by autocatalysis modification is found at His-339.

Its subcellular location is the cell membrane. It carries out the reaction ATP + protein L-histidine = ADP + protein N-phospho-L-histidine.. Functionally, member of the two-component regulatory system DctS/DctR. Probably activates DctR by phosphorylation. Essential for expression of dctP. This Halalkalibacterium halodurans (strain ATCC BAA-125 / DSM 18197 / FERM 7344 / JCM 9153 / C-125) (Bacillus halodurans) protein is Probable C4-dicarboxylate sensor kinase (dctS).